A 282-amino-acid chain; its full sequence is D-arabinitol 2-dehydrogenase [ribulose-forming] (282 aa).

The NADP(+) site is built by leucine 32 and asparagine 53. The active-site Proton donor is the serine 170. NADP(+) contacts are provided by tyrosine 185, lysine 189, isoleucine 218, and threonine 220. The Proton acceptor role is filled by tyrosine 185. Lysine 189 (lowers pKa of active site Tyr) is an active-site residue.

The protein belongs to the short-chain dehydrogenases/reductases (SDR) family.

It catalyses the reaction D-arabinitol + NAD(+) = D-ribulose + NADH + H(+). It participates in carbohydrate metabolism; D-arabinitol metabolism. Catalyzes the NAD(+)-dependent oxidation of D-arabinitol at carbon 4 to produce D-ribulose. The polypeptide is D-arabinitol 2-dehydrogenase [ribulose-forming] (ARD) (Candida tropicalis (Yeast)).